The sequence spans 284 residues: Ubiquinone biosynthesis protein COQ4, mitochondrial (284 aa).

Zn(2+) contacts are provided by histidine 165, aspartate 166, histidine 169, and glutamate 181.

The protein belongs to the COQ4 family. In terms of assembly, component of a multi-subunit COQ enzyme complex, composed of at least COQ3, COQ4, COQ5, COQ6, COQ7 and COQ9. Zn(2+) serves as cofactor.

Its subcellular location is the mitochondrion inner membrane. It catalyses the reaction a 4-hydroxy-3-methoxy-5-(all-trans-polyprenyl)benzoate + H(+) = a 2-methoxy-6-(all-trans-polyprenyl)phenol + CO2. It functions in the pathway cofactor biosynthesis; ubiquinone biosynthesis. Its function is as follows. Lyase that catalyzes the C1-decarboxylation of 4-hydroxy-3-methoxy-5-(all-trans-polyprenyl)benzoic acid into 2-methoxy-6-(all-trans-polyprenyl)phenol during ubiquinone biosynthesis. This Ajellomyces dermatitidis (strain ER-3 / ATCC MYA-2586) (Blastomyces dermatitidis) protein is Ubiquinone biosynthesis protein COQ4, mitochondrial.